The chain runs to 268 residues: 3-deoxy-manno-octulosonate cytidylyltransferase (268 aa).

It belongs to the KdsB family.

It localises to the cytoplasm. It carries out the reaction 3-deoxy-alpha-D-manno-oct-2-ulosonate + CTP = CMP-3-deoxy-beta-D-manno-octulosonate + diphosphate. Its pathway is nucleotide-sugar biosynthesis; CMP-3-deoxy-D-manno-octulosonate biosynthesis; CMP-3-deoxy-D-manno-octulosonate from 3-deoxy-D-manno-octulosonate and CTP: step 1/1. The protein operates within bacterial outer membrane biogenesis; lipopolysaccharide biosynthesis. Its function is as follows. Activates KDO (a required 8-carbon sugar) for incorporation into bacterial lipopolysaccharide in Gram-negative bacteria. In Ralstonia pickettii (strain 12J), this protein is 3-deoxy-manno-octulosonate cytidylyltransferase.